A 402-amino-acid polypeptide reads, in one-letter code: MGFFRILFSLSLCALSLAIPSKLIGLENTKDVIPNSYIVVMKSAVSEAEFQSHQAWASKIHSRSLGKRDGVLDDFGGLKATFQFEGLKGYSGAFDKKTIELITRNPAVDYVEVDRVVKLDAISTQRDAPSWGLGRISHRRVGSADYVFDDSAGSGITIYGVDTGIDIRHPEFGGRAAWGTNTVDDEDTDQNGHGTHTAGTFGGATYGIAKKANIVAVKVLNAQGTGTTSGVIQGIQWCTDHAGRNGLRGKAAMNLSLGIRGSTIFNRVAEAAQASGIFLAVAAGNDGTDAGQFSPASARGVCTAAATNSQDAATSWSNYGSVVAVYGPGADIVSAYPNDDTATLSGTSMASPHVCGVGAYLMALEGIGPDTVCDRIKQLASESVTNQKPNTTKKLLYNGSGA.

Residues 1 to 18 form the signal peptide; it reads MGFFRILFSLSLCALSLA. A propeptide spanning residues 19-120 is cleaved from the precursor; it reads IPSKLIGLEN…VEVDRVVKLD (102 aa). An Inhibitor I9 domain is found at 36–119; sequence SYIVVMKSAV…YVEVDRVVKL (84 aa). Residues 130–402 enclose the Peptidase S8 domain; sequence SWGLGRISHR…KKLLYNGSGA (273 aa). Residues aspartate 162 and histidine 193 each act as charge relay system in the active site. Asparagine 254 carries an N-linked (GlcNAc...) asparagine glycan. Serine 348 functions as the Charge relay system in the catalytic mechanism. Residues asparagine 390 and asparagine 398 are each glycosylated (N-linked (GlcNAc...) asparagine).

It belongs to the peptidase S8 family.

Its subcellular location is the secreted. Its function is as follows. Secreted subtilisin-like serine protease with keratinolytic activity that contributes to pathogenicity. The sequence is that of Subtilisin-like protease 9 (SUB9) from Arthroderma gypseum (strain ATCC MYA-4604 / CBS 118893) (Microsporum gypseum).